The primary structure comprises 378 residues: Putative glutamate--cysteine ligase 2 (378 aa).

This sequence belongs to the glutamate--cysteine ligase type 2 family. YbdK subfamily.

It catalyses the reaction L-cysteine + L-glutamate + ATP = gamma-L-glutamyl-L-cysteine + ADP + phosphate + H(+). In terms of biological role, ATP-dependent carboxylate-amine ligase which exhibits weak glutamate--cysteine ligase activity. This is Putative glutamate--cysteine ligase 2 from Pseudomonas paraeruginosa (strain DSM 24068 / PA7) (Pseudomonas aeruginosa (strain PA7)).